The sequence spans 405 residues: Tryptophan synthase beta chain (405 aa).

Lys-95 carries the N6-(pyridoxal phosphate)lysine modification.

It belongs to the TrpB family. As to quaternary structure, tetramer of two alpha and two beta chains. Requires pyridoxal 5'-phosphate as cofactor.

It carries out the reaction (1S,2R)-1-C-(indol-3-yl)glycerol 3-phosphate + L-serine = D-glyceraldehyde 3-phosphate + L-tryptophan + H2O. The protein operates within amino-acid biosynthesis; L-tryptophan biosynthesis; L-tryptophan from chorismate: step 5/5. The beta subunit is responsible for the synthesis of L-tryptophan from indole and L-serine. This Pseudomonas putida (Arthrobacter siderocapsulatus) protein is Tryptophan synthase beta chain (trpB).